The following is a 532-amino-acid chain: CTP synthase (532 aa).

The amidoligase domain stretch occupies residues 1 to 268; sequence MTTKYIFVTG…DEIVCDHLNL (268 aa). Ser-14 is a CTP binding site. Residue Ser-14 coordinates UTP. Residue 15 to 20 coordinates ATP; the sequence is SLGKGI. Tyr-55 contacts L-glutamine. Residue Asp-72 coordinates ATP. Mg(2+)-binding residues include Asp-72 and Glu-142. Residues 149-151, 189-194, and Lys-225 contribute to the CTP site; these read DIE and KSKPTQ. Residues 189-194 and Lys-225 each bind UTP; that span reads KSKPTQ. An ATP-binding site is contributed by 241 to 243; it reads RDA. One can recognise a Glutamine amidotransferase type-1 domain in the interval 293–532; it reads KIALVGKYVA…REFIQASLRK (240 aa). Gly-355 provides a ligand contact to L-glutamine. The active-site Nucleophile; for glutamine hydrolysis is the Cys-382. L-glutamine-binding positions include 383 to 386, Glu-406, and Arg-463; that span reads LGMQ. Residues His-508 and Glu-510 contribute to the active site.

It belongs to the CTP synthase family. Homotetramer.

The enzyme catalyses UTP + L-glutamine + ATP + H2O = CTP + L-glutamate + ADP + phosphate + 2 H(+). The catalysed reaction is L-glutamine + H2O = L-glutamate + NH4(+). It catalyses the reaction UTP + NH4(+) + ATP = CTP + ADP + phosphate + 2 H(+). Its pathway is pyrimidine metabolism; CTP biosynthesis via de novo pathway; CTP from UDP: step 2/2. Allosterically activated by GTP, when glutamine is the substrate; GTP has no effect on the reaction when ammonia is the substrate. The allosteric effector GTP functions by stabilizing the protein conformation that binds the tetrahedral intermediate(s) formed during glutamine hydrolysis. Inhibited by the product CTP, via allosteric rather than competitive inhibition. Catalyzes the ATP-dependent amination of UTP to CTP with either L-glutamine or ammonia as the source of nitrogen. Regulates intracellular CTP levels through interactions with the four ribonucleotide triphosphates. This Halalkalibacterium halodurans (strain ATCC BAA-125 / DSM 18197 / FERM 7344 / JCM 9153 / C-125) (Bacillus halodurans) protein is CTP synthase.